The sequence spans 306 residues: Secreted RxLR effector protein 76 (306 aa).

Residues 1–21 (MSGAFYVFTALLLVASDQIAA) form the signal peptide. The RxLR-dEER motif lies at 48–65 (RFLRGSRDEPDNLANEER). The tract at residues 105 to 142 (AAKAVKKRPRGAKAGRKMPRAAEAEAVKKVPRAGTAVK) is disordered. A compositionally biased stretch (basic residues) spans 107–123 (KAVKKRPRGAKAGRKMP).

Belongs to the RxLR effector family.

Its subcellular location is the secreted. It is found in the host nucleus. Secreted effector that partially suppresses the host cell death induced by cell death-inducing proteins. In Plasmopara viticola (Downy mildew of grapevine), this protein is Secreted RxLR effector protein 76.